The following is a 428-amino-acid chain: 3-phosphoshikimate 1-carboxyvinyltransferase (428 aa).

Residues lysine 20, serine 21, and arginine 25 each contribute to the 3-phosphoshikimate site. A phosphoenolpyruvate-binding site is contributed by lysine 20. Phosphoenolpyruvate-binding residues include glycine 92 and arginine 120. The 3-phosphoshikimate site is built by serine 166, glutamine 168, aspartate 314, and lysine 341. Glutamine 168 contacts phosphoenolpyruvate. The active-site Proton acceptor is the aspartate 314. Positions 345 and 387 each coordinate phosphoenolpyruvate.

It belongs to the EPSP synthase family. In terms of assembly, monomer.

The protein resides in the cytoplasm. The catalysed reaction is 3-phosphoshikimate + phosphoenolpyruvate = 5-O-(1-carboxyvinyl)-3-phosphoshikimate + phosphate. It participates in metabolic intermediate biosynthesis; chorismate biosynthesis; chorismate from D-erythrose 4-phosphate and phosphoenolpyruvate: step 6/7. Its function is as follows. Catalyzes the transfer of the enolpyruvyl moiety of phosphoenolpyruvate (PEP) to the 5-hydroxyl of shikimate-3-phosphate (S3P) to produce enolpyruvyl shikimate-3-phosphate and inorganic phosphate. The protein is 3-phosphoshikimate 1-carboxyvinyltransferase of Listeria monocytogenes serotype 4b (strain CLIP80459).